We begin with the raw amino-acid sequence, 541 residues long: DNA ligase 1 (541 aa).

ATP is bound at residue Glu234. Catalysis depends on Lys236, which acts as the N6-AMP-lysine intermediate. Arg241, Arg256, Glu286, Phe325, Arg398, and Lys404 together coordinate ATP.

It belongs to the ATP-dependent DNA ligase family. The cofactor is Mg(2+).

The catalysed reaction is ATP + (deoxyribonucleotide)n-3'-hydroxyl + 5'-phospho-(deoxyribonucleotide)m = (deoxyribonucleotide)n+m + AMP + diphosphate.. Functionally, DNA ligase that seals nicks in double-stranded DNA during DNA replication, DNA recombination and DNA repair. In Korarchaeum cryptofilum (strain OPF8), this protein is DNA ligase 1.